The following is a 247-amino-acid chain: MAGGVLPLRGLRALCRVLLFLSQFCILSGGEQSQALAQSIKDPGPTRTFTVVPRAAESTEIPPYVMKCPSNGLCSRLPADCIDCTTNFSCTYGKPVTFDCAVKPSVTCVDQDFKSQKNFIINMTCRFCWQLPETDYECTNSTSCMTVSCPRQRYPANCTVRDHVHCLGNRTFPKMLYCNWTGGYKWSTALALSITLGGFGADRFYLGQWREGLGKLFSFGGLGIWTLIDVLLIGVGYVGPADGSLYI.

The first 29 residues, 1 to 29 (MAGGVLPLRGLRALCRVLLFLSQFCILSG), serve as a signal peptide directing secretion. Over 30-179 (GEQSQALAQS…RTFPKMLYCN (150 aa)) the chain is Extracellular. 6 N-linked (GlcNAc...) asparagine glycosylation sites follow: N87, N122, N140, N157, N169, and N179. A helical transmembrane segment spans residues 180-200 (WTGGYKWSTALALSITLGGFG). The TM2 domain occupies 183-230 (GYKWSTALALSITLGGFGADRFYLGQWREGLGKLFSFGGLGIWTLIDV). Residues 201-215 (ADRFYLGQWREGLGK) are Cytoplasmic-facing. Residues 216 to 236 (LFSFGGLGIWTLIDVLLIGVG) form a helical membrane-spanning segment. At 237–247 (YVGPADGSLYI) the chain is on the extracellular side.

The protein belongs to the TM2 family. As to expression, widely expressed.

Its subcellular location is the membrane. In terms of biological role, probable positive regulator of Notch signaling. This is TM2 domain-containing protein 3 (TM2D3) from Homo sapiens (Human).